Consider the following 403-residue polypeptide: Tyrosine--tRNA ligase (403 aa).

The 'HIGH' region motif lies at proline 45–histidine 54. The short motif at lysine 229–serine 233 is the 'KMSKS' region element. Lysine 232 serves as a coordination point for ATP. One can recognise an S4 RNA-binding domain in the interval valine 341 to phenylalanine 402.

This sequence belongs to the class-I aminoacyl-tRNA synthetase family. TyrS type 2 subfamily. As to quaternary structure, homodimer.

Its subcellular location is the cytoplasm. The catalysed reaction is tRNA(Tyr) + L-tyrosine + ATP = L-tyrosyl-tRNA(Tyr) + AMP + diphosphate + H(+). Catalyzes the attachment of tyrosine to tRNA(Tyr) in a two-step reaction: tyrosine is first activated by ATP to form Tyr-AMP and then transferred to the acceptor end of tRNA(Tyr). This chain is Tyrosine--tRNA ligase, found in Geobacter sulfurreducens (strain ATCC 51573 / DSM 12127 / PCA).